A 442-amino-acid chain; its full sequence is Thymidine phosphorylase (442 aa).

It belongs to the thymidine/pyrimidine-nucleoside phosphorylase family. Homodimer.

It catalyses the reaction thymidine + phosphate = 2-deoxy-alpha-D-ribose 1-phosphate + thymine. The protein operates within pyrimidine metabolism; dTMP biosynthesis via salvage pathway; dTMP from thymine: step 1/2. The enzymes which catalyze the reversible phosphorolysis of pyrimidine nucleosides are involved in the degradation of these compounds and in their utilization as carbon and energy sources, or in the rescue of pyrimidine bases for nucleotide synthesis. This is Thymidine phosphorylase from Pectobacterium atrosepticum (strain SCRI 1043 / ATCC BAA-672) (Erwinia carotovora subsp. atroseptica).